A 219-amino-acid polypeptide reads, in one-letter code: Uracil phosphoribosyltransferase 1 (219 aa).

GTP is bound by residues Arg-33, Arg-42, and 76–79 (DGRI). Arg-86 lines the 5-phospho-alpha-D-ribose 1-diphosphate pocket. Arg-103 contributes to the GTP binding site. Arg-111 lines the 5-phospho-alpha-D-ribose 1-diphosphate pocket. Residue Arg-132 coordinates GTP. 5-phospho-alpha-D-ribose 1-diphosphate is bound by residues Asp-138 and 138–146 (DPMLATGGS). D-ribose 5-phosphate is bound at residue Tyr-202. Residues Ile-203 and 208 to 210 (GDF) each bind uracil. Asp-209 contributes to the 5-phospho-alpha-D-ribose 1-diphosphate binding site.

The protein belongs to the UPRTase family. Mg(2+) is required as a cofactor.

It catalyses the reaction UMP + diphosphate = 5-phospho-alpha-D-ribose 1-diphosphate + uracil. It participates in pyrimidine metabolism; UMP biosynthesis via salvage pathway; UMP from uracil: step 1/1. With respect to regulation, allosterically activated by GTP. Its function is as follows. Catalyzes the conversion of uracil and 5-phospho-alpha-D-ribose 1-diphosphate (PRPP) to UMP and diphosphate. The protein is Uracil phosphoribosyltransferase 1 of Schizosaccharomyces pombe (strain 972 / ATCC 24843) (Fission yeast).